The sequence spans 514 residues: 2,3-bisphosphoglycerate-independent phosphoglycerate mutase (514 aa).

Residues aspartate 14 and serine 64 each contribute to the Mn(2+) site. The active-site Phosphoserine intermediate is the serine 64. Substrate is bound by residues histidine 125, 155-156, arginine 187, arginine 193, 263-266, and lysine 336; these read RD and RADR. The Mn(2+) site is built by aspartate 403, histidine 407, aspartate 444, histidine 445, and histidine 463.

It belongs to the BPG-independent phosphoglycerate mutase family. In terms of assembly, monomer. Requires Mn(2+) as cofactor.

It catalyses the reaction (2R)-2-phosphoglycerate = (2R)-3-phosphoglycerate. It functions in the pathway carbohydrate degradation; glycolysis; pyruvate from D-glyceraldehyde 3-phosphate: step 3/5. In terms of biological role, catalyzes the interconversion of 2-phosphoglycerate and 3-phosphoglycerate. This Salmonella typhi protein is 2,3-bisphosphoglycerate-independent phosphoglycerate mutase.